A 183-amino-acid polypeptide reads, in one-letter code: Large ribosomal subunit protein uL6 (183 aa).

Belongs to the universal ribosomal protein uL6 family. As to quaternary structure, part of the 50S ribosomal subunit.

This protein binds to the 23S rRNA, and is important in its secondary structure. It is located near the subunit interface in the base of the L7/L12 stalk, and near the tRNA binding site of the peptidyltransferase center. In Chlamydia trachomatis serovar A (strain ATCC VR-571B / DSM 19440 / HAR-13), this protein is Large ribosomal subunit protein uL6.